A 523-amino-acid chain; its full sequence is 2-isopropylmalate synthase (523 aa).

Residues 5 to 267 (VIIFDTTLRD…HTNINHHEIW (263 aa)) enclose the Pyruvate carboxyltransferase domain. 4 residues coordinate Mn(2+): D14, H202, H204, and N238. Residues 392–523 (RLDYFSVQSG…HNKENNKEIV (132 aa)) form a regulatory domain region.

Belongs to the alpha-IPM synthase/homocitrate synthase family. LeuA type 1 subfamily. As to quaternary structure, homodimer. It depends on Mn(2+) as a cofactor.

It is found in the cytoplasm. The enzyme catalyses 3-methyl-2-oxobutanoate + acetyl-CoA + H2O = (2S)-2-isopropylmalate + CoA + H(+). The protein operates within amino-acid biosynthesis; L-leucine biosynthesis; L-leucine from 3-methyl-2-oxobutanoate: step 1/4. Its function is as follows. Catalyzes the condensation of the acetyl group of acetyl-CoA with 3-methyl-2-oxobutanoate (2-ketoisovalerate) to form 3-carboxy-3-hydroxy-4-methylpentanoate (2-isopropylmalate). This is 2-isopropylmalate synthase from Salmonella arizonae (strain ATCC BAA-731 / CDC346-86 / RSK2980).